The sequence spans 217 residues: Uracil-DNA glycosylase (217 aa).

Aspartate 62 (proton acceptor) is an active-site residue.

This sequence belongs to the uracil-DNA glycosylase (UDG) superfamily. UNG family.

It localises to the cytoplasm. The catalysed reaction is Hydrolyzes single-stranded DNA or mismatched double-stranded DNA and polynucleotides, releasing free uracil.. Functionally, excises uracil residues from the DNA which can arise as a result of misincorporation of dUMP residues by DNA polymerase or due to deamination of cytosine. The sequence is that of Uracil-DNA glycosylase from Streptococcus pyogenes serotype M18 (strain MGAS8232).